The sequence spans 315 residues: Replication factor C small subunit (315 aa).

Residue 43–50 (GSPGVGKT) coordinates ATP.

This sequence belongs to the activator 1 small subunits family. RfcS subfamily. Heteromultimer composed of small subunits (RfcS) and large subunits (RfcL).

Part of the RFC clamp loader complex which loads the PCNA sliding clamp onto DNA. This is Replication factor C small subunit from Methanococcus maripaludis (strain C6 / ATCC BAA-1332).